A 374-amino-acid polypeptide reads, in one-letter code: Chaperone protein DnaJ (374 aa).

The J domain occupies 4 to 69 (SYYEILEITQ…EKRAIYDRYG (66 aa)). A CR-type zinc finger spans residues 136-213 (GCKKNIDFTY…CKGLGYNESK (78 aa)). The Zn(2+) site is built by Cys-149, Cys-152, Cys-165, Cys-168, Cys-187, Cys-190, Cys-201, and Cys-204. CXXCXGXG motif repeat units follow at residues 149-156 (CKTCNGTG), 165-172 (CPKCQGRG), 187-194 (CPDCQGSG), and 201-208 (CNDCKGLG).

It belongs to the DnaJ family. In terms of assembly, homodimer. Requires Zn(2+) as cofactor.

The protein localises to the cytoplasm. Functionally, participates actively in the response to hyperosmotic and heat shock by preventing the aggregation of stress-denatured proteins and by disaggregating proteins, also in an autonomous, DnaK-independent fashion. Unfolded proteins bind initially to DnaJ; upon interaction with the DnaJ-bound protein, DnaK hydrolyzes its bound ATP, resulting in the formation of a stable complex. GrpE releases ADP from DnaK; ATP binding to DnaK triggers the release of the substrate protein, thus completing the reaction cycle. Several rounds of ATP-dependent interactions between DnaJ, DnaK and GrpE are required for fully efficient folding. Also involved, together with DnaK and GrpE, in the DNA replication of plasmids through activation of initiation proteins. The polypeptide is Chaperone protein DnaJ (Campylobacter jejuni subsp. doylei (strain ATCC BAA-1458 / RM4099 / 269.97)).